Consider the following 497-residue polypeptide: Virion host shutoff protein (497 aa).

2 disordered regions span residues 122–142 (EHDT…PPQD) and 280–373 (SVIS…SAEA). Over residues 309 to 326 (PNERRVISWRRQDDHDYD) the composition is skewed to basic and acidic residues. Positions 327-344 (SSTEDSDQSDSSEEEEEC) are enriched in acidic residues.

It belongs to the herpesviridae VHS protein family.

It is found in the virion. In terms of biological role, minor structural protein that acts as an endoribonuclease during lytic infection. Degrades host mRNAs in the cytoplasm by cutting them at preferred sites, including some in regions of translation initiation. The polypeptide is Virion host shutoff protein (Equine herpesvirus 1 (strain Ab4p) (EHV-1)).